The following is a 284-amino-acid chain: Bifunctional protein FolD (284 aa).

Residues 164 to 166 (GRG), T189, and I230 contribute to the NADP(+) site.

Belongs to the tetrahydrofolate dehydrogenase/cyclohydrolase family. As to quaternary structure, homodimer.

It carries out the reaction (6R)-5,10-methylene-5,6,7,8-tetrahydrofolate + NADP(+) = (6R)-5,10-methenyltetrahydrofolate + NADPH. The enzyme catalyses (6R)-5,10-methenyltetrahydrofolate + H2O = (6R)-10-formyltetrahydrofolate + H(+). It functions in the pathway one-carbon metabolism; tetrahydrofolate interconversion. Functionally, catalyzes the oxidation of 5,10-methylenetetrahydrofolate to 5,10-methenyltetrahydrofolate and then the hydrolysis of 5,10-methenyltetrahydrofolate to 10-formyltetrahydrofolate. This is Bifunctional protein FolD from Pelotomaculum thermopropionicum (strain DSM 13744 / JCM 10971 / SI).